A 106-amino-acid chain; its full sequence is MSSNIAVVGDRDTVTGFRLGGVREGYVVETPDEAEETIRNLIRDGFSIIIVTEKIGDELREFIEETTSSSALPMIIEIPDKTGPSERETDPLRDLIKRVIGVEMVK.

Belongs to the V-ATPase F subunit family. Has multiple subunits with at least A(3), B(3), C, D, E, F, H, I and proteolipid K(x).

The protein resides in the cell membrane. Its function is as follows. Component of the A-type ATP synthase that produces ATP from ADP in the presence of a proton gradient across the membrane. This is A-type ATP synthase subunit F from Methanothermobacter thermautotrophicus (strain ATCC 29096 / DSM 1053 / JCM 10044 / NBRC 100330 / Delta H) (Methanobacterium thermoautotrophicum).